We begin with the raw amino-acid sequence, 462 residues long: Syringate O-demethylase (462 aa).

This sequence belongs to the GcvT family.

It catalyses the reaction syringate + (6S)-5,6,7,8-tetrahydrofolate = 3-O-methylgallate + (6S)-5-methyl-5,6,7,8-tetrahydrofolate. The protein operates within secondary metabolite metabolism; lignin degradation. Involved in the catabolism of syringate. Catalyzes the conversion of syringate to 3-O-methylgallate (3MGA) in the presence of tetrahydrofolate. Has weak activity with vanillate and 3-O-methylgallate. The sequence is that of Syringate O-demethylase from Sphingobium sp. (strain NBRC 103272 / SYK-6).